A 521-amino-acid chain; its full sequence is Protein NRT1/ PTR FAMILY 5.5 (521 aa).

12 helical membrane passes run 3–23 (VLSW…LYLT), 35–55 (AIVN…QFLV), 62–82 (FWML…LAIS), 96–116 (FYVA…SLGV), 134–154 (LVSF…AAIA), 165–185 (FTIP…GACS), 279–299 (VPLF…NTFF), 310–327 (FGSW…SEAA), 356–376 (PYGI…AAHV), 394–414 (VPMS…ITGI), 440–460 (VGVC…VGSV), and 478–498 (YYWV…IVTY).

It belongs to the major facilitator superfamily. Proton-dependent oligopeptide transporter (POT/PTR) (TC 2.A.17) family. In terms of tissue distribution, expressed in roots.

It localises to the membrane. The polypeptide is Protein NRT1/ PTR FAMILY 5.5 (NPF5.5) (Arabidopsis thaliana (Mouse-ear cress)).